The primary structure comprises 147 residues: Hemoglobin subunit epsilon (147 aa).

The 145-residue stretch at 3–147 (HFTAEEKSTI…VATALAHKYH (145 aa)) folds into the Globin domain. 2 positions are modified to phosphoserine: Ser-14 and Ser-51. Heme b contacts are provided by His-64 and His-93.

The protein belongs to the globin family. In terms of assembly, heterotetramer of two alpha chains and two epsilon chains in early embryonic hemoglobin Gower-2; two zeta chains and two epsilon chains in early embryonic hemoglobin Gower-1. In terms of tissue distribution, red blood cells.

Functionally, the epsilon chain is a beta-type chain of early mammalian embryonic hemoglobin. The sequence is that of Hemoglobin subunit epsilon (HBE1) from Eulemur fulvus fulvus (Brown lemur).